Consider the following 239-residue polypeptide: Protein G1-like8 (239 aa).

Disordered stretches follow at residues 1 to 35 (MEGGGGGADAQAQAQPVAQAPPAMQPMQQLSRYES) and 149 to 239 (KARG…ATRV). The span at 9–29 (DAQAQAQPVAQAPPAMQPMQQ) shows a compositional bias: low complexity. In terms of domain architecture, ALOG spans 32–159 (RYESQKRRDW…ARGIPYEKKK (128 aa)). The Nuclear localization signal motif lies at 157–161 (KKKRK). Over residues 167-178 (QPPPQPPLPPQH) the composition is skewed to pro residues. Low complexity-rich tracts occupy residues 179–215 (QPGAAAGEASSSSSAAAAAVAAEGSGSSAATAAATSQ) and 223–239 (TTTTTASAAAPTTATRV).

The protein belongs to the plant homeotic and developmental regulators ALOG protein family.

The protein resides in the nucleus. Probable transcription regulator that acts as a developmental regulator by promoting cell growth in response to light. This chain is Protein G1-like8, found in Oryza sativa subsp. indica (Rice).